Consider the following 745-residue polypeptide: Heterogeneous nuclear ribonucleoprotein U-like protein 2 (745 aa).

An SAP domain is found at 3-37 (VKRLKVTELRSELQRRGLDSRGLKMDLAQRLQEAL). Disordered regions lie at residues 44–239 (DEAG…DEEE) and 625–664 (EEAR…GQRR). Over residues 73-97 (GDEEEEDDDEEEDEEALLEDEDEEP) the composition is skewed to acidic residues. The span at 142-161 (GEEHDNGKGEEDGPEERSGD) shows a compositional bias: basic and acidic residues. Ser159 is modified (phosphoserine). Thr163 carries the phosphothreonine modification. Residues Ser166, Ser183, Ser186, Ser224, and Ser226 each carry the phosphoserine modification. Over residues 183-221 (SEKSKPAGSDGERRGVKRQRDEKDEHGRAYYEFREEAYH) the composition is skewed to basic and acidic residues. The 194-residue stretch at 224-417 (SKSPPPPEEE…VELNFGQKEE (194 aa)) folds into the B30.2/SPRY domain. Over residues 230 to 239 (PEEEAKDEEE) the composition is skewed to acidic residues. A compositionally biased stretch (basic and acidic residues) spans 625–637 (EEARKLLPPSEKR). Basic residues predominate over residues 638–652 (TNRRNNRNKRNRQNR). Residues Arg654, Arg682, Arg736, and Arg745 each carry the omega-N-methylarginine modification.

In terms of assembly, binds to MLF1 and retains it in the nucleus.

Its subcellular location is the nucleus. This is Heterogeneous nuclear ribonucleoprotein U-like protein 2 (Hnrnpul2) from Mus musculus (Mouse).